Consider the following 443-residue polypeptide: tRNA modification GTPase MnmE (443 aa).

Residues Arg23, Glu82, and Lys121 each coordinate (6S)-5-formyl-5,6,7,8-tetrahydrofolate. A TrmE-type G domain is found at 215 to 364 (GTSIVLAGHP…LKQFIQKWIQ (150 aa)). A K(+)-binding site is contributed by Asn225. Residues 225 to 230 (NAGKSS), 244 to 250 (TDIPGTT), and 269 to 272 (DSAG) each bind GTP. Position 229 (Ser229) interacts with Mg(2+). K(+)-binding residues include Thr244, Ile246, and Thr249. Thr250 contacts Mg(2+). Lys443 provides a ligand contact to (6S)-5-formyl-5,6,7,8-tetrahydrofolate.

The protein belongs to the TRAFAC class TrmE-Era-EngA-EngB-Septin-like GTPase superfamily. TrmE GTPase family. In terms of assembly, homodimer. Heterotetramer of two MnmE and two MnmG subunits. It depends on K(+) as a cofactor.

The protein resides in the cytoplasm. Exhibits a very high intrinsic GTPase hydrolysis rate. Involved in the addition of a carboxymethylaminomethyl (cmnm) group at the wobble position (U34) of certain tRNAs, forming tRNA-cmnm(5)s(2)U34. The protein is tRNA modification GTPase MnmE of Chlamydia felis (strain Fe/C-56) (Chlamydophila felis).